Here is a 148-residue protein sequence, read N- to C-terminus: Transcription antitermination protein NusB (148 aa).

The protein belongs to the NusB family.

In terms of biological role, involved in transcription antitermination. Required for transcription of ribosomal RNA (rRNA) genes. Binds specifically to the boxA antiterminator sequence of the ribosomal RNA (rrn) operons. The protein is Transcription antitermination protein NusB of Saccharopolyspora erythraea (strain ATCC 11635 / DSM 40517 / JCM 4748 / NBRC 13426 / NCIMB 8594 / NRRL 2338).